The chain runs to 562 residues: MOB kinase activator-like 2 (562 aa).

Positions 30–50 are disordered; the sequence is KSGSVQGTTATATATGPPSPP. Over residues 31-45 the composition is skewed to low complexity; that stretch reads SGSVQGTTATATATG. Cys170, Cys175, His250, and His255 together coordinate Zn(2+). Disordered stretches follow at residues 304 to 378, 468 to 523, and 538 to 562; these read DDTS…TASA, NFSN…STTV, and GASA…SSTA. Low complexity-rich tracts occupy residues 305-349, 357-378, and 471-481; these read DTSG…NSTS, NSQS…TASA, and NNNNNNHNLNH. Residues 482 to 514 show a composition bias toward basic residues; that stretch reads LNHHHHHHHHQHHHQHHPHGHHGHQGHQGHQGH. Residues 547-562 show a composition bias toward low complexity; sequence AVSAATGGATSASSTA.

The protein belongs to the MOB1/phocein family. In terms of assembly, interacts with and activates trc, also interacts with wts.

Its subcellular location is the cytoplasm. It is found in the nucleus. Required for the normal morphogenesis of a variety of polarized outgrowths including epidermal hairs, bristles, arista laterals, and dendrites. In Drosophila pseudoobscura pseudoobscura (Fruit fly), this protein is MOB kinase activator-like 2.